The following is a 293-amino-acid chain: Heterogeneous nuclear ribonucleoprotein D-like-A (293 aa).

A disordered region spans residues M1–N21. 2 consecutive RRM domains span residues G26 to E108 and K111 to P188. Disordered stretches follow at residues R193–Q224 and Q274–Y293. Over residues G202 to W222 the composition is skewed to gly residues.

The protein localises to the nucleus. It localises to the cytoplasm. In terms of biological role, acts as a transcriptional regulator. Binds DNA and RNA. This chain is Heterogeneous nuclear ribonucleoprotein D-like-A (hnrnpdl-a), found in Xenopus laevis (African clawed frog).